The following is a 263-amino-acid chain: Mediator of RNA polymerase II transcription subunit 4 (263 aa).

Positions 62 to 106 (QLAAEQAGIEKKMDGLREQVKEQDEEINQLQKQLKEAEHILATSI) form a coiled coil. The disordered stretch occupies residues 221–263 (LHMTMGAGAGSVSLDTRSHKDASQDDVEVMSTDSSSSSSSDSQ). Low complexity predominate over residues 251–263 (STDSSSSSSSDSQ).

It belongs to the Mediator complex subunit 4 family. As to quaternary structure, component of the Mediator complex.

It is found in the nucleus. In terms of biological role, component of the Mediator complex, a coactivator involved in the regulated transcription of nearly all RNA polymerase II-dependent genes. Mediator functions as a bridge to convey information from gene-specific regulatory proteins to the basal RNA polymerase II transcription machinery. Mediator is recruited to promoters by direct interactions with regulatory proteins and serves as a scaffold for the assembly of a functional preinitiation complex with RNA polymerase II and the general transcription factors. In Aedes aegypti (Yellowfever mosquito), this protein is Mediator of RNA polymerase II transcription subunit 4 (MED4).